Consider the following 425-residue polypeptide: Glutamyl-tRNA(Gln) amidotransferase subunit D (425 aa).

The segment at 53–84 is disordered; sequence ENNGEAANGGNGGKNGQKEPEPAKEKVSKPGL. Over residues 68–80 the composition is skewed to basic and acidic residues; it reads GQKEPEPAKEKVS. The 330-residue stretch at 85 to 414 folds into the Asparaginase/glutaminase domain; sequence PKVSILSTGG…EKAVSMLGEN (330 aa). Catalysis depends on residues threonine 95, threonine 171, aspartate 172, and lysine 248.

This sequence belongs to the asparaginase 1 family. GatD subfamily. As to quaternary structure, heterodimer of GatD and GatE.

It carries out the reaction L-glutamyl-tRNA(Gln) + L-glutamine + ATP + H2O = L-glutaminyl-tRNA(Gln) + L-glutamate + ADP + phosphate + H(+). In terms of biological role, allows the formation of correctly charged Gln-tRNA(Gln) through the transamidation of misacylated Glu-tRNA(Gln) in organisms which lack glutaminyl-tRNA synthetase. The reaction takes place in the presence of glutamine and ATP through an activated gamma-phospho-Glu-tRNA(Gln). The GatDE system is specific for glutamate and does not act on aspartate. The sequence is that of Glutamyl-tRNA(Gln) amidotransferase subunit D from Methanosarcina mazei (strain ATCC BAA-159 / DSM 3647 / Goe1 / Go1 / JCM 11833 / OCM 88) (Methanosarcina frisia).